A 238-amino-acid chain; its full sequence is Histone H1 (238 aa).

2 stretches are compositionally biased toward low complexity: residues 21-34 (AAVD…AKAP) and 123-132 (AKAPAAVKPK). Disordered regions lie at residues 21-57 (AAVD…AHPS) and 123-238 (AKAP…KAKK). The region spanning 54–124 (AHPSYAEMVS…KVKGSYKLAK (71 aa)) is the H15 domain. Basic residues predominate over residues 133 to 197 (TATKKKPAAK…AAKPKAKAAA (65 aa)). Low complexity-rich tracts occupy residues 198–208 (KKAPAAATPKK) and 217–230 (KRAT…PAKK).

It belongs to the histone H1/H5 family.

Its subcellular location is the nucleus. The protein resides in the chromosome. Histones H1 are necessary for the condensation of nucleosome chains into higher-order structures. This Triticum aestivum (Wheat) protein is Histone H1.